A 154-amino-acid chain; its full sequence is Myoglobin (154 aa).

Residues 2-148 (GLSDGEWQLV…FRNDMATKYK (147 aa)) form the Globin domain. Serine 4 is subject to Phosphoserine. Histidine 65 serves as a coordination point for nitrite. Residue histidine 65 coordinates O2. Histidine 94 provides a ligand contact to heme b.

Belongs to the globin family. In terms of assembly, monomeric.

The protein resides in the cytoplasm. The protein localises to the sarcoplasm. The catalysed reaction is Fe(III)-heme b-[protein] + nitric oxide + H2O = Fe(II)-heme b-[protein] + nitrite + 2 H(+). It carries out the reaction H2O2 + AH2 = A + 2 H2O. Monomeric heme protein which primary function is to store oxygen and facilitate its diffusion within muscle tissues. Reversibly binds oxygen through a pentacoordinated heme iron and enables its timely and efficient release as needed during periods of heightened demand. Depending on the oxidative conditions of tissues and cells, and in addition to its ability to bind oxygen, it also has a nitrite reductase activity whereby it regulates the production of bioactive nitric oxide. Under stress conditions, like hypoxia and anoxia, it also protects cells against reactive oxygen species thanks to its pseudoperoxidase activity. The sequence is that of Myoglobin (MB) from Tachyglossus aculeatus aculeatus (Southeast Australian short-beaked echidna).